The sequence spans 456 residues: E3 ubiquitin-protein ligase PUB24 (456 aa).

The U-box domain maps to 9-83 (EIPNYFICPI…QHWCVENETR (75 aa)).

In terms of processing, auto-ubiquitinated.

It catalyses the reaction S-ubiquitinyl-[E2 ubiquitin-conjugating enzyme]-L-cysteine + [acceptor protein]-L-lysine = [E2 ubiquitin-conjugating enzyme]-L-cysteine + N(6)-ubiquitinyl-[acceptor protein]-L-lysine.. Its pathway is protein modification; protein ubiquitination. In terms of biological role, E3 ubiquitin-protein ligase that acts as a negative regulator of the immunity triggered by the pathogen-associated molecular patterns (PAMPs), in association with PUB22 and PUB23. This Arabidopsis thaliana (Mouse-ear cress) protein is E3 ubiquitin-protein ligase PUB24 (PUB24).